A 416-amino-acid polypeptide reads, in one-letter code: NADH-quinone oxidoreductase subunit H (416 aa).

A run of 9 helical transmembrane segments spans residues 16–36 (LILA…LAAI), 84–104 (PVYL…FAVI), 124–144 (LAVA…GIVL), 165–185 (VVSY…YAGT), 197–217 (STWY…SMVG), 260–280 (VSAL…PISL), 288–308 (WWPL…YIWL), 320–340 (FMAI…MIVA), and 353–373 (WASG…VILW).

This sequence belongs to the complex I subunit 1 family. As to quaternary structure, NDH-1 is composed of 14 different subunits. Subunits NuoA, H, J, K, L, M, N constitute the membrane sector of the complex.

It localises to the cell membrane. The catalysed reaction is a quinone + NADH + 5 H(+)(in) = a quinol + NAD(+) + 4 H(+)(out). NDH-1 shuttles electrons from NADH, via FMN and iron-sulfur (Fe-S) centers, to quinones in the respiratory chain. The immediate electron acceptor for the enzyme in this species is believed to be menaquinone. Couples the redox reaction to proton translocation (for every two electrons transferred, four hydrogen ions are translocated across the cytoplasmic membrane), and thus conserves the redox energy in a proton gradient. This subunit may bind ubiquinone. The protein is NADH-quinone oxidoreductase subunit H of Mycobacterium sp. (strain KMS).